A 415-amino-acid polypeptide reads, in one-letter code: MSKTHLTEKKFSDFALYPPIVEVLDSKGFNNCTPIQALTLPTTLAGKDVAGQAQTGTGKTLAFLTATFHHLLTHPAAEGRQTNQPRALIMAPTRELAVQIHSDAEPLAQATGLKMGLAYGGDGYDKQLKVLEAGVDILVGTTGRLIDYTKQNYVNMSAIQVVVLDEADRMFDLGFIKDIRWLFRRMPAAAGRLNMLFSATLSYRVRELAFEHMNNAEYVEVEPLQKTGHRIQEELFYPSNEEKMRLLQTLIEEEWPDRCIIFANTKHRCEDIWGHLAADGHRVGLLTGDVSQKRRLRILEKFTQGALDILVATDVAARGLHIPSVTHVFNYDLPDDCEDYVHRIGRTGRAGESGCSISLACEEYALNLTAIESYIGHQIPVSKYNSDALLTDLPAPKRLTRRRSGAPRHNRKRPG.

Residues 9–37 carry the Q motif motif; it reads KKFSDFALYPPIVEVLDSKGFNNCTPIQA. The Helicase ATP-binding domain maps to 40–219; sequence LPTTLAGKDV…FEHMNNAEYV (180 aa). Residue 53 to 60 coordinates ATP; sequence AQTGTGKT. Residues 165–168 carry the DEAD box motif; that stretch reads DEAD. The Helicase C-terminal domain maps to 245-390; the sequence is RLLQTLIEEE…VSKYNSDALL (146 aa). The segment at 396 to 415 is disordered; sequence PKRLTRRRSGAPRHNRKRPG. A compositionally biased stretch (basic residues) spans 398-415; the sequence is RLTRRRSGAPRHNRKRPG.

The protein belongs to the DEAD box helicase family. RhlB subfamily. Component of the RNA degradosome, which is a multiprotein complex involved in RNA processing and mRNA degradation.

The protein localises to the cytoplasm. It carries out the reaction ATP + H2O = ADP + phosphate + H(+). Functionally, DEAD-box RNA helicase involved in RNA degradation. Has RNA-dependent ATPase activity and unwinds double-stranded RNA. The chain is ATP-dependent RNA helicase RhlB from Sodalis glossinidius (strain morsitans).